Consider the following 343-residue polypeptide: Phospholipid phosphatase-related protein type 2 (343 aa).

Helical transmembrane passes span 12-32 (FSIIPCFVFVESVLLGIVVLL), 72-92 (ALIYALVTAGPTLTILLGELA), and 129-149 (FLGVYSFGLFTTTIFANAGQV). Asn165 carries N-linked (GlcNAc...) asparagine glycosylation. 3 helical membrane-spanning segments follow: residues 210–230 (AALCAYAVTYTAMYVTLVFRV), 239–259 (SLCLALLCPAFLVGVVRVAEY), and 266–286 (VLAGFLTGAAIATFLVTCVVH). The interval 291-343 (RPHSGRRLSPWEDLSQAPTMDSPLEKNPRPAGRIRHRHGSPHPSRRTVPAVAT) is disordered. Phosphoserine occurs at positions 299 and 312. Positions 322–335 (GRIRHRHGSPHPSR) are enriched in basic residues.

It belongs to the PA-phosphatase related phosphoesterase family.

The protein localises to the membrane. The polypeptide is Phospholipid phosphatase-related protein type 2 (Mus musculus (Mouse)).